The primary structure comprises 98 residues: Large ribosomal subunit protein bL25 (98 aa).

The protein belongs to the bacterial ribosomal protein bL25 family. In terms of assembly, part of the 50S ribosomal subunit; part of the 5S rRNA/L5/L18/L25 subcomplex. Contacts the 5S rRNA. Binds to the 5S rRNA independently of L5 and L18.

This is one of the proteins that binds to the 5S RNA in the ribosome where it forms part of the central protuberance. The polypeptide is Large ribosomal subunit protein bL25 (Synechocystis sp. (strain ATCC 27184 / PCC 6803 / Kazusa)).